A 324-amino-acid chain; its full sequence is Thiazole synthase (324 aa).

The Schiff-base intermediate with DXP role is filled by K167. 1-deoxy-D-xylulose 5-phosphate-binding positions include G228, 254–255 (AG), and 276–277 (NT).

The protein belongs to the ThiG family. As to quaternary structure, homotetramer. Forms heterodimers with either ThiH or ThiS.

The protein resides in the cytoplasm. The enzyme catalyses [ThiS sulfur-carrier protein]-C-terminal-Gly-aminoethanethioate + 2-iminoacetate + 1-deoxy-D-xylulose 5-phosphate = [ThiS sulfur-carrier protein]-C-terminal Gly-Gly + 2-[(2R,5Z)-2-carboxy-4-methylthiazol-5(2H)-ylidene]ethyl phosphate + 2 H2O + H(+). It participates in cofactor biosynthesis; thiamine diphosphate biosynthesis. In terms of biological role, catalyzes the rearrangement of 1-deoxy-D-xylulose 5-phosphate (DXP) to produce the thiazole phosphate moiety of thiamine. Sulfur is provided by the thiocarboxylate moiety of the carrier protein ThiS. In vitro, sulfur can be provided by H(2)S. The polypeptide is Thiazole synthase (Paramagnetospirillum magneticum (strain ATCC 700264 / AMB-1) (Magnetospirillum magneticum)).